The following is a 92-amino-acid chain: YcgL domain-containing protein Sfri_1738 (92 aa).

Positions 1–85 constitute a YcgL domain; it reads MICAVYKSGR…PQINLLEQHK (85 aa).

The protein is YcgL domain-containing protein Sfri_1738 of Shewanella frigidimarina (strain NCIMB 400).